The sequence spans 446 residues: Argininosuccinate synthase (446 aa).

ATP is bound by residues 17-25 and A43; that span reads AFSGGLDTS. Residue Y99 participates in L-citrulline binding. Residues G129 and T131 each coordinate ATP. The L-aspartate site is built by T131, N135, and D136. N135 provides a ligand contact to L-citrulline. D136 lines the ATP pocket. R139 and S192 together coordinate L-citrulline. D194 serves as a coordination point for ATP. T201, E203, and E280 together coordinate L-citrulline.

It belongs to the argininosuccinate synthase family. Type 2 subfamily. In terms of assembly, homotetramer.

It is found in the cytoplasm. The catalysed reaction is L-citrulline + L-aspartate + ATP = 2-(N(omega)-L-arginino)succinate + AMP + diphosphate + H(+). Its pathway is amino-acid biosynthesis; L-arginine biosynthesis; L-arginine from L-ornithine and carbamoyl phosphate: step 2/3. The chain is Argininosuccinate synthase from Burkholderia mallei (strain NCTC 10247).